A 515-amino-acid polypeptide reads, in one-letter code: MDEFHRYGKEDSSWQQCFLYPLFFQEDLYAISHDHYLDGSSSSEPMEHLSSNDQFSFLTVKRLIGQIRQQNHSIVLFVNCDPNPLVDRKKSSYSESVLEGLTLVLEVPFSIRSKYSVEGMNEWKSFRSIHSIFPFLEDKFPHSNYVSDTRIPYSIHPEILVRTFRRWIGDAPSLHPLRSILYEYRNSSESLQRSIIVVPKVNTRFFLFLWNNYVYECESILVSLLKRSSHSRSLSHGSFPQRTHFHRKIKNIFLFSRRNSLQSIWSLKDPNIHYVRYGERSIIAIKGTHLLVKKYRYYLPIFRQCYFHLWNEPYRVCSHQLSKNCSSSLGYFMRVRMKPLLVKTKMLDELFIADLITDEFDPIVPIVPIIGLLSREKFCDISGRPISKLSWTSLTDDDILDRFDRIWRNLFHYYSGSFGRDGLYRIKYILSLSCAKTLACKHKSTIRVVRKELGPELFKKSFSKERELDSPPFSSKAAARSQRERIWHSDIPQINPLAHSWQKIQDLKIENLFDQ.

Belongs to the intron maturase 2 family. MatK subfamily.

It is found in the plastid. Its subcellular location is the chloroplast. Usually encoded in the trnK tRNA gene intron. Probably assists in splicing its own and other chloroplast group II introns. This Picea sitchensis (Sitka spruce) protein is Maturase K.